The primary structure comprises 484 residues: Ectonucleoside triphosphate diphosphohydrolase 6 (484 aa).

Topologically, residues 1-39 (MKKGIRYETSRKTSYIFQQPQHGPWQTRMRKISNHGSLR) are cytoplasmic. Residues 40-60 (VAKVAYPLGLCVGVFIYVAYI) form a helical; Signal-anchor for type II membrane protein membrane-spanning segment. Topologically, residues 61–484 (KWHRATATQA…SLNRQKSPAS (424 aa)) are lumenal. N220 carries an N-linked (GlcNAc...) asparagine glycan. The active-site Proton acceptor is the E224. An N-linked (GlcNAc...) asparagine glycan is attached at N284. Cystine bridges form between C325–C356 and C416–C430.

Belongs to the GDA1/CD39 NTPase family. In terms of assembly, monomer. Ca(2+) serves as cofactor. The cofactor is Mg(2+). Post-translationally, the secreted form may be produced by intracellular processing. N-glycosylated. Expressed in most tissues, but predominantly in heart.

The protein resides in the golgi apparatus membrane. Its subcellular location is the secreted. It is found in the cell membrane. The catalysed reaction is a ribonucleoside 5'-diphosphate + H2O = a ribonucleoside 5'-phosphate + phosphate + H(+). The enzyme catalyses IDP + H2O = IMP + phosphate + H(+). It carries out the reaction GDP + H2O = GMP + phosphate + H(+). It catalyses the reaction UDP + H2O = UMP + phosphate + H(+). With respect to regulation, glycosylation does not appear to be required for enzymatic activity. Functionally, catalyzes the hydrolysis of nucleoside triphosphates and diphosphates in a calcium- or magnesium-dependent manner. Has a strong preference for nucleoside diphosphates, preferentially hydrolyzes GDP, IDP, and UDP, with slower hydrolysis of CDP, ITP, GTP, CTP, ADP, and UTP and virtually no hydrolysis of ATP. The membrane bound form might support glycosylation reactions in the Golgi apparatus and, when released from cells, might catalyze the hydrolysis of extracellular nucleotides. The protein is Ectonucleoside triphosphate diphosphohydrolase 6 (ENTPD6) of Homo sapiens (Human).